A 329-amino-acid polypeptide reads, in one-letter code: 4-hydroxythreonine-4-phosphate dehydrogenase (329 aa).

Positions 136 and 137 each coordinate substrate. Residues H166, H211, and H266 each contribute to the a divalent metal cation site. Substrate-binding residues include K274, N283, and R292.

The protein belongs to the PdxA family. As to quaternary structure, homodimer. The cofactor is Zn(2+). It depends on Mg(2+) as a cofactor. Requires Co(2+) as cofactor.

Its subcellular location is the cytoplasm. The enzyme catalyses 4-(phosphooxy)-L-threonine + NAD(+) = 3-amino-2-oxopropyl phosphate + CO2 + NADH. The protein operates within cofactor biosynthesis; pyridoxine 5'-phosphate biosynthesis; pyridoxine 5'-phosphate from D-erythrose 4-phosphate: step 4/5. In terms of biological role, catalyzes the NAD(P)-dependent oxidation of 4-(phosphooxy)-L-threonine (HTP) into 2-amino-3-oxo-4-(phosphooxy)butyric acid which spontaneously decarboxylates to form 3-amino-2-oxopropyl phosphate (AHAP). The protein is 4-hydroxythreonine-4-phosphate dehydrogenase of Citrobacter koseri (strain ATCC BAA-895 / CDC 4225-83 / SGSC4696).